The primary structure comprises 341 residues: L-threonine 3-dehydrogenase (341 aa).

Residue Cys-38 participates in Zn(2+) binding. Active-site charge relay system residues include Thr-40 and His-43. His-63, Glu-64, Cys-93, Cys-96, Cys-99, and Cys-107 together coordinate Zn(2+). NAD(+) contacts are provided by residues Ile-175, Asp-195, Arg-200, Leu-262–Ile-264, and Ile-286–Tyr-287.

This sequence belongs to the zinc-containing alcohol dehydrogenase family. Homotetramer. It depends on Zn(2+) as a cofactor.

Its subcellular location is the cytoplasm. The catalysed reaction is L-threonine + NAD(+) = (2S)-2-amino-3-oxobutanoate + NADH + H(+). It participates in amino-acid degradation; L-threonine degradation via oxydo-reductase pathway; glycine from L-threonine: step 1/2. Its function is as follows. Catalyzes the NAD(+)-dependent oxidation of L-threonine to 2-amino-3-ketobutyrate. The protein is L-threonine 3-dehydrogenase of Marinomonas sp. (strain MWYL1).